Here is a 269-residue protein sequence, read N- to C-terminus: Putative aga operon transcriptional repressor (269 aa).

Positions 15-70 constitute an HTH deoR-type domain; the sequence is TSERREQIIQRLRQQGSVQVNDLSALYGVSTVTIRNDLAFLEKQGIAVRAYGGALI. Residues 32–51 constitute a DNA-binding region (H-T-H motif); sequence VQVNDLSALYGVSTVTIRND.

Functionally, probable repressor for the aga operon for N-acetyl galactosamine transport and metabolism. The sequence is that of Putative aga operon transcriptional repressor (agaR) from Escherichia coli O157:H7.